The following is a 245-amino-acid chain: Uridylate kinase (245 aa).

15 to 18 is an ATP binding site; sequence KLSG. The involved in allosteric activation by GTP stretch occupies residues 23–28; it reads GDEGFG. G57 provides a ligand contact to UMP. ATP-binding residues include G58 and R62. UMP-binding positions include D77 and 138-145; that span reads TGNPFCTT. Positions 165, 171, and 174 each coordinate ATP.

The protein belongs to the UMP kinase family. Homohexamer.

It localises to the cytoplasm. The catalysed reaction is UMP + ATP = UDP + ADP. Its pathway is pyrimidine metabolism; CTP biosynthesis via de novo pathway; UDP from UMP (UMPK route): step 1/1. With respect to regulation, allosterically activated by GTP. Inhibited by UTP. In terms of biological role, catalyzes the reversible phosphorylation of UMP to UDP. This is Uridylate kinase from Shewanella baltica (strain OS155 / ATCC BAA-1091).